A 197-amino-acid chain; its full sequence is SIGLEC family-like protein 1 (197 aa).

Residues 118–138 (GAIYAGIVIALLFLCLLPLIV) traverse the membrane as a helical segment. The interval 160–179 (VRASQELEMSLKPEEPGKPV) is disordered. Residues 162-176 (ASQELEMSLKPEEPG) are compositionally biased toward basic and acidic residues.

It is found in the membrane. The chain is SIGLEC family-like protein 1 (SIGLECL1) from Homo sapiens (Human).